A 594-amino-acid chain; its full sequence is Adenine deaminase 1 (594 aa).

The protein belongs to the metallo-dependent hydrolases superfamily. Adenine deaminase family. Mn(2+) is required as a cofactor.

It carries out the reaction adenine + H2O + H(+) = hypoxanthine + NH4(+). This is Adenine deaminase 1 from Desulfotalea psychrophila (strain LSv54 / DSM 12343).